The following is a 315-amino-acid chain: MVKTNISKNSPKEATVPELDWPFKLIKSHLETRKLETENVWIACFEPKYASKVTQYVKQIRSKQKESLLHCNRLRRIQDENGSLELQIIICPEKSMTANEIGKDFEDLGIVSKMIFLYAVPAFPPLTDEQFHEWNSVWPVSYRKHVQRQDVFTVHELKRIESILEDLINAAGASHKHGEIGCAAAIYDPTTDTVLAVSVDERSKLKNPINHCVMNAINLVAKRELSRRQNRTDGSKDRYLCKDLTVVMTHEPCVMCSMGLLHSRIRRLIYCKKQPLTGGIESLYGIHWRAELNHRYLAYSGWNKPVPSIKENIHV.

Residues 158–299 (KRIESILEDL…AELNHRYLAY (142 aa)) form the CMP/dCMP-type deaminase domain. Zn(2+) is bound by residues His-211, Cys-253, and Cys-256.

It belongs to the cytidine and deoxycytidylate deaminase family. ADAT3 subfamily. As to quaternary structure, heterodimer with Tad2.

The protein resides in the cytoplasm. It localises to the nucleus. In terms of biological role, structural subunit of tRNA-specific adenosine deaminase, which deaminates adenosine-34 (the first, also called wobble position of the anticodon) to inosine in many tRNAs. Inosine-34 allows the decoding of 3 different nucleotides at the third position of mRNA codons, as inosine is able to pair with U, C, and A. The wobble inosine tRNA modification is essential for cell cycle progression in the G1/S and G2/M transitions in fission yeast. This Schizosaccharomyces pombe (strain 972 / ATCC 24843) (Fission yeast) protein is tRNA-specific adenosine deaminase subunit tad3 (tad3).